We begin with the raw amino-acid sequence, 397 residues long: S-adenosylmethionine synthase (397 aa).

ATP is bound at residue histidine 15. Aspartate 17 lines the Mg(2+) pocket. Residue glutamate 43 coordinates K(+). L-methionine-binding residues include glutamate 56 and glutamine 99. Residues 99–109 form a flexible loop region; it reads QSPDIAMGVNK. Residues 175 to 177, 241 to 242, aspartate 250, 256 to 257, alanine 273, and lysine 277 contribute to the ATP site; these read DGK, RF, and RK. Aspartate 250 is a binding site for L-methionine. Lysine 281 is an L-methionine binding site.

Belongs to the AdoMet synthase family. Homotetramer; dimer of dimers. Mg(2+) serves as cofactor. Requires K(+) as cofactor.

Its subcellular location is the cytoplasm. The enzyme catalyses L-methionine + ATP + H2O = S-adenosyl-L-methionine + phosphate + diphosphate. It participates in amino-acid biosynthesis; S-adenosyl-L-methionine biosynthesis; S-adenosyl-L-methionine from L-methionine: step 1/1. In terms of biological role, catalyzes the formation of S-adenosylmethionine (AdoMet) from methionine and ATP. The overall synthetic reaction is composed of two sequential steps, AdoMet formation and the subsequent tripolyphosphate hydrolysis which occurs prior to release of AdoMet from the enzyme. The protein is S-adenosylmethionine synthase of Acetivibrio thermocellus (strain ATCC 27405 / DSM 1237 / JCM 9322 / NBRC 103400 / NCIMB 10682 / NRRL B-4536 / VPI 7372) (Clostridium thermocellum).